Reading from the N-terminus, the 881-residue chain is DNA mismatch repair protein MutS (881 aa).

632–639 is a binding site for ATP; sequence GPNMGGKS.

It belongs to the DNA mismatch repair MutS family.

Functionally, this protein is involved in the repair of mismatches in DNA. It is possible that it carries out the mismatch recognition step. This protein has a weak ATPase activity. This is DNA mismatch repair protein MutS from Chelativorans sp. (strain BNC1).